A 1046-amino-acid polypeptide reads, in one-letter code: DNA-directed RNA polymerase subunit beta' (1046 aa).

Mg(2+)-binding residues include Asp-383, Asp-385, and Asp-387. Cys-752, Cys-826, Cys-833, and Cys-836 together coordinate Zn(2+).

The protein belongs to the RNA polymerase beta' chain family. As to quaternary structure, the RNAP catalytic core consists of 2 alpha, 1 beta, 1 beta' and 1 omega subunit. When a sigma factor is associated with the core the holoenzyme is formed, which can initiate transcription. Mg(2+) serves as cofactor. It depends on Zn(2+) as a cofactor.

It catalyses the reaction RNA(n) + a ribonucleoside 5'-triphosphate = RNA(n+1) + diphosphate. In terms of biological role, DNA-dependent RNA polymerase catalyzes the transcription of DNA into RNA using the four ribonucleoside triphosphates as substrates. In Weissella hellenica, this protein is DNA-directed RNA polymerase subunit beta'.